A 291-amino-acid chain; its full sequence is 4-hydroxy-tetrahydrodipicolinate synthase (291 aa).

Residue T45 coordinates pyruvate. The Proton donor/acceptor role is filled by Y133. The Schiff-base intermediate with substrate role is filled by K161. I203 contacts pyruvate.

It belongs to the DapA family. In terms of assembly, homotetramer; dimer of dimers.

Its subcellular location is the cytoplasm. The catalysed reaction is L-aspartate 4-semialdehyde + pyruvate = (2S,4S)-4-hydroxy-2,3,4,5-tetrahydrodipicolinate + H2O + H(+). It participates in amino-acid biosynthesis; L-lysine biosynthesis via DAP pathway; (S)-tetrahydrodipicolinate from L-aspartate: step 3/4. Catalyzes the condensation of (S)-aspartate-beta-semialdehyde [(S)-ASA] and pyruvate to 4-hydroxy-tetrahydrodipicolinate (HTPA). The polypeptide is 4-hydroxy-tetrahydrodipicolinate synthase (Teredinibacter turnerae (strain ATCC 39867 / T7901)).